The following is a 55-amino-acid chain: MAKKNREKIKMISSAGTGHYYTTTKNKRNTPDKLKLKKYDPIIRKHILYNEGKIK.

Belongs to the bacterial ribosomal protein bL33 family.

The protein is Large ribosomal subunit protein bL33 of Buchnera aphidicola subsp. Schizaphis graminum (strain Sg).